The primary structure comprises 317 residues: D-alanine--D-alanine ligase (317 aa).

In terms of domain architecture, ATP-grasp spans 103–299; sequence KHIFHSLNID…FNELVKIIVE (197 aa). ATP is bound at residue 130 to 183; that stretch reads KVDYPYVLKPINEGSSIGVHMIFSHEDYLELKNNSSTIMEKMIIEEYIPGIELH. Mg(2+) is bound by residues D251, E265, and N267.

It belongs to the D-alanine--D-alanine ligase family. Requires Mg(2+) as cofactor. Mn(2+) serves as cofactor.

The protein resides in the cytoplasm. The catalysed reaction is 2 D-alanine + ATP = D-alanyl-D-alanine + ADP + phosphate + H(+). The protein operates within cell wall biogenesis; peptidoglycan biosynthesis. Its function is as follows. Cell wall formation. This Wolbachia pipientis subsp. Culex pipiens (strain wPip) protein is D-alanine--D-alanine ligase.